Consider the following 34-residue polypeptide: DDIT3 upstream open reading frame protein (34 aa).

Interacts with DDIT3 (isoform 1).

The protein localises to the nucleus. Its subcellular location is the cytoplasm. In terms of biological role, product of the upstream open reading frame (uORF) of DDIT3/CHOP that is specifically produced in absence of stress, thereby preventing translation of downstream stress effector DDIT3/CHOP. This Mus musculus (Mouse) protein is DDIT3 upstream open reading frame protein.